The following is a 207-amino-acid chain: Thiamine-phosphate synthase (207 aa).

Residues 36–40 and Asp68 contribute to the 4-amino-2-methyl-5-(diphosphooxymethyl)pyrimidine site; that span reads QLRIK. Mg(2+) is bound by residues Asp69 and Asp88. Ser106 is a binding site for 4-amino-2-methyl-5-(diphosphooxymethyl)pyrimidine. 132–134 provides a ligand contact to 2-[(2R,5Z)-2-carboxy-4-methylthiazol-5(2H)-ylidene]ethyl phosphate; the sequence is TKT. Lys135 is a binding site for 4-amino-2-methyl-5-(diphosphooxymethyl)pyrimidine. 2-[(2R,5Z)-2-carboxy-4-methylthiazol-5(2H)-ylidene]ethyl phosphate-binding positions include Gly162 and 182-183; that span reads VS.

Belongs to the thiamine-phosphate synthase family. The cofactor is Mg(2+).

The enzyme catalyses 2-[(2R,5Z)-2-carboxy-4-methylthiazol-5(2H)-ylidene]ethyl phosphate + 4-amino-2-methyl-5-(diphosphooxymethyl)pyrimidine + 2 H(+) = thiamine phosphate + CO2 + diphosphate. It carries out the reaction 2-(2-carboxy-4-methylthiazol-5-yl)ethyl phosphate + 4-amino-2-methyl-5-(diphosphooxymethyl)pyrimidine + 2 H(+) = thiamine phosphate + CO2 + diphosphate. It catalyses the reaction 4-methyl-5-(2-phosphooxyethyl)-thiazole + 4-amino-2-methyl-5-(diphosphooxymethyl)pyrimidine + H(+) = thiamine phosphate + diphosphate. It functions in the pathway cofactor biosynthesis; thiamine diphosphate biosynthesis; thiamine phosphate from 4-amino-2-methyl-5-diphosphomethylpyrimidine and 4-methyl-5-(2-phosphoethyl)-thiazole: step 1/1. Functionally, condenses 4-methyl-5-(beta-hydroxyethyl)thiazole monophosphate (THZ-P) and 2-methyl-4-amino-5-hydroxymethyl pyrimidine pyrophosphate (HMP-PP) to form thiamine monophosphate (TMP). The sequence is that of Thiamine-phosphate synthase from Pyrococcus abyssi (strain GE5 / Orsay).